The following is a 97-amino-acid chain: Citrate lyase acyl carrier protein (97 aa).

S14 is modified (O-(phosphoribosyl dephospho-coenzyme A)serine).

It belongs to the CitD family. As to quaternary structure, oligomer with a subunit composition of (alpha,beta,gamma)6.

It localises to the cytoplasm. In terms of biological role, covalent carrier of the coenzyme of citrate lyase. The sequence is that of Citrate lyase acyl carrier protein from Rhodopseudomonas palustris (strain BisA53).